The following is a 534-amino-acid chain: Glucan endo-1,3-beta-glucosidase 12 (534 aa).

The first 24 residues, methionine 1–alanine 24, serve as a signal peptide directing secretion. The Proton donor role is filled by glutamate 120. Asparagine 127 carries N-linked (GlcNAc...) asparagine glycosylation. The active-site Nucleophile is the glutamate 264. 3 N-linked (GlcNAc...) asparagine glycosylation sites follow: asparagine 336, asparagine 357, and asparagine 375. The segment at glutamate 348 to threonine 379 is disordered. Over residues asparagine 349–threonine 377 the composition is skewed to low complexity. Cysteine 392 and cysteine 455 form a disulfide bridge. N-linked (GlcNAc...) asparagine glycosylation is found at asparagine 485, asparagine 491, and asparagine 495. The GPI-anchor amidated serine moiety is linked to residue serine 507. A propeptide spans serine 508–tryptophan 534 (removed in mature form).

Belongs to the glycosyl hydrolase 17 family. Contains two additional disulfide bonds.

The protein localises to the secreted. The protein resides in the cell wall. Its subcellular location is the cell membrane. The enzyme catalyses Hydrolysis of (1-&gt;3)-beta-D-glucosidic linkages in (1-&gt;3)-beta-D-glucans.. The protein is Glucan endo-1,3-beta-glucosidase 12 of Arabidopsis thaliana (Mouse-ear cress).